Consider the following 667-residue polypeptide: DNA ligase (667 aa).

NAD(+) is bound by residues 32 to 36 (DKDYD) and 80 to 81 (SL). The active-site N6-AMP-lysine intermediate is the lysine 121. Positions 143, 178, and 314 each coordinate NAD(+). Cysteine 407, cysteine 410, cysteine 423, and cysteine 429 together coordinate Zn(2+). Residues 587-667 (IVESIFKDKT…EFEKMLGRES (81 aa)) form the BRCT domain.

It belongs to the NAD-dependent DNA ligase family. LigA subfamily. Requires Mg(2+) as cofactor. Mn(2+) serves as cofactor.

It carries out the reaction NAD(+) + (deoxyribonucleotide)n-3'-hydroxyl + 5'-phospho-(deoxyribonucleotide)m = (deoxyribonucleotide)n+m + AMP + beta-nicotinamide D-nucleotide.. Its function is as follows. DNA ligase that catalyzes the formation of phosphodiester linkages between 5'-phosphoryl and 3'-hydroxyl groups in double-stranded DNA using NAD as a coenzyme and as the energy source for the reaction. It is essential for DNA replication and repair of damaged DNA. The chain is DNA ligase from Clostridium botulinum (strain Alaska E43 / Type E3).